Consider the following 232-residue polypeptide: Lipoprotein-releasing system ATP-binding protein LolD (232 aa).

Positions 11 to 231 (VYLHDIKREY…SLENGHVVEL (221 aa)) constitute an ABC transporter domain. 47 to 54 (APSGSGKS) serves as a coordination point for ATP.

The protein belongs to the ABC transporter superfamily. Lipoprotein translocase (TC 3.A.1.125) family. The complex is composed of two ATP-binding proteins (LolD) and two transmembrane proteins (LolC and LolE).

Its subcellular location is the cell inner membrane. Part of the ABC transporter complex LolCDE involved in the translocation of mature outer membrane-directed lipoproteins, from the inner membrane to the periplasmic chaperone, LolA. Responsible for the formation of the LolA-lipoprotein complex in an ATP-dependent manner. The polypeptide is Lipoprotein-releasing system ATP-binding protein LolD (Nitrobacter winogradskyi (strain ATCC 25391 / DSM 10237 / CIP 104748 / NCIMB 11846 / Nb-255)).